Here is a 236-residue protein sequence, read N- to C-terminus: uncharacterized protein (236 aa).

The chain crosses the membrane as a helical span at residues 52 to 72; sequence FFPYIALFQIIMLIILLILYF. The tract at residues 183–236 is disordered; sequence SDKREHDDEELSFTTEMETITTETETSSTIPHLRSLPIKSESSMETTSEETDEE. Residues 196–212 show a composition bias toward low complexity; sequence TTEMETITTETETSSTI.

It is found in the membrane. This is an uncharacterized protein from Acheta domesticus (House cricket).